The following is an 82-amino-acid chain: Small ribosomal subunit protein bS16 (82 aa).

The protein belongs to the bacterial ribosomal protein bS16 family.

This chain is Small ribosomal subunit protein bS16, found in Caldanaerobacter subterraneus subsp. tengcongensis (strain DSM 15242 / JCM 11007 / NBRC 100824 / MB4) (Thermoanaerobacter tengcongensis).